The sequence spans 124 residues: MLVIFLGILGLLANQVLGLPTQAGGHLRSTDNPPQEELGYWCTYMESCKFCWECAHGICKNKVNTSMPLIIENSYLTSCEVSRWYNQCTYSEGNGHYHVMDCSDPVPHNRPHQLLRKIYEKEDL.

A signal peptide spans Met-1–Gly-18. Asn-64 carries an N-linked (GlcNAc...) asparagine; by host glycan. Positions Lys-121–Leu-124 match the Prevents secretion from ER motif.

The protein belongs to the asfivirus MGF 110 family.

The protein resides in the virion. It localises to the host endoplasmic reticulum-Golgi intermediate compartment. Causes the redistribution of lumenal ER protein to an enlarged ERGIC compartment. The chain is Protein MGF 110-4L from Ornithodoros (relapsing fever ticks).